Consider the following 253-residue polypeptide: tRNA (guanine-N(1)-)-methyltransferase (253 aa).

Residues glycine 116 and 136 to 141 contribute to the S-adenosyl-L-methionine site; that span reads VGDYIL.

The protein belongs to the RNA methyltransferase TrmD family. Homodimer.

The protein localises to the cytoplasm. The catalysed reaction is guanosine(37) in tRNA + S-adenosyl-L-methionine = N(1)-methylguanosine(37) in tRNA + S-adenosyl-L-homocysteine + H(+). Specifically methylates guanosine-37 in various tRNAs. This is tRNA (guanine-N(1)-)-methyltransferase from Colwellia psychrerythraea (strain 34H / ATCC BAA-681) (Vibrio psychroerythus).